The chain runs to 210 residues: Probable nicotinate-nucleotide adenylyltransferase (210 aa).

The protein belongs to the NadD family.

The enzyme catalyses nicotinate beta-D-ribonucleotide + ATP + H(+) = deamido-NAD(+) + diphosphate. The protein operates within cofactor biosynthesis; NAD(+) biosynthesis; deamido-NAD(+) from nicotinate D-ribonucleotide: step 1/1. Catalyzes the reversible adenylation of nicotinate mononucleotide (NaMN) to nicotinic acid adenine dinucleotide (NaAD). The chain is Probable nicotinate-nucleotide adenylyltransferase from Streptococcus pyogenes serotype M6 (strain ATCC BAA-946 / MGAS10394).